Consider the following 276-residue polypeptide: Diaminopimelate epimerase (276 aa).

Residues Asn-13, Gln-46, and Asn-66 each contribute to the substrate site. The active-site Proton donor is the Cys-75. Substrate-binding positions include 76-77, Asn-159, Asn-192, and 210-211; these read GN and ER. Cys-219 acts as the Proton acceptor in catalysis. 220-221 is a binding site for substrate; the sequence is GS.

Belongs to the diaminopimelate epimerase family. In terms of assembly, homodimer.

Its subcellular location is the cytoplasm. The catalysed reaction is (2S,6S)-2,6-diaminopimelate = meso-2,6-diaminopimelate. The protein operates within amino-acid biosynthesis; L-lysine biosynthesis via DAP pathway; DL-2,6-diaminopimelate from LL-2,6-diaminopimelate: step 1/1. Catalyzes the stereoinversion of LL-2,6-diaminopimelate (L,L-DAP) to meso-diaminopimelate (meso-DAP), a precursor of L-lysine and an essential component of the bacterial peptidoglycan. The protein is Diaminopimelate epimerase of Vibrio parahaemolyticus serotype O3:K6 (strain RIMD 2210633).